The sequence spans 438 residues: MSNSTQHWIAQRGTALQGSLTIPGDKSVSHRAVMFAALADGTSKIDGFLEGEDTRSTAAIFAQLGVRIETPSASQRIVHGVGVDGLQPPQGPLDCGNAGTGMRLLAGVLAAQRFDSVLVGDASLSKRPMRRVTDPLAQMGARIETESDGTPPLRVHGGQALQGITFASPVASAQVKSAVLLAGLYATGETSVSEPHPTRDYTERMLSAFGVEIAFSPGQARLRGGQRLRATDIAVPADFSSAAFFIVAASIIPGSDVTLRAVGLNPRRTGLLAALRLMGADIVEDNHAEHGGEPVADLRVRYAPLRGAQIPEALVPDMIDEFPALFVAAAAARGDTVVSGAAELRVKESDRLAAMATGLRALGIVVDEKPDGATIHGGTLGSGVIESHGDHRIAMAFAIAGQLSTGTVQVNDVANVATSFPGFDSLAQGAGFGLSARP.

The 3-phosphoshikimate site is built by K26, S27, and R31. K26 is a phosphoenolpyruvate binding site. Phosphoenolpyruvate-binding residues include G99 and R127. S172, Q174, D320, and K347 together coordinate 3-phosphoshikimate. Q174 lines the phosphoenolpyruvate pocket. The active-site Proton acceptor is D320. Phosphoenolpyruvate-binding residues include R351 and R392.

It belongs to the EPSP synthase family. In terms of assembly, monomer.

Its subcellular location is the cytoplasm. It catalyses the reaction 3-phosphoshikimate + phosphoenolpyruvate = 5-O-(1-carboxyvinyl)-3-phosphoshikimate + phosphate. It functions in the pathway metabolic intermediate biosynthesis; chorismate biosynthesis; chorismate from D-erythrose 4-phosphate and phosphoenolpyruvate: step 6/7. In terms of biological role, catalyzes the transfer of the enolpyruvyl moiety of phosphoenolpyruvate (PEP) to the 5-hydroxyl of shikimate-3-phosphate (S3P) to produce enolpyruvyl shikimate-3-phosphate and inorganic phosphate. The protein is 3-phosphoshikimate 1-carboxyvinyltransferase of Xanthomonas campestris pv. campestris (strain B100).